The sequence spans 223 residues: MNLQNNQGKFSKEQFSKERFCQLEDEQVIEMVHVGDSDALDYLITKYRNFVRAKARSYFLIGADREDIVQEGMIGLYKSIRDFREDKLTSFKAFAELCITRQIITAIKTATRQKHIPLNSYVSLDKPIYDEESDRTLLDVISGAKVMNPEELIINQEEFDDIELKMGELLSDLERKVLALYLDGRSYQEISEELNRHVKSIDNALQRVKRKLEKYLELREISL.

The short motif at 67 to 80 (DIVQEGMIGLYKSI) is the Polymerase core binding element. The segment at residues 187 to 206 (YQEISEELNRHVKSIDNALQ) is a DNA-binding region (H-T-H motif).

Belongs to the sigma-70 factor family.

In terms of biological role, sigma factors are initiation factors that promote the attachment of RNA polymerase to specific initiation sites and are then released. This sigma factor is involved in the transition to post-exponential phase in the beginning of sporulation. The chain is RNA polymerase sigma-H factor (sigH) from Bacillus licheniformis.